A 363-amino-acid polypeptide reads, in one-letter code: Probable endopolygalacturonase A (363 aa).

Positions 1–20 (MQLLQSSVIAATVGAALVAA) are cleaved as a signal peptide. Residues 21-28 (APVELEAR) constitute a propeptide that is removed on maturation. Cysteine 31 and cysteine 46 are disulfide-bonded. 6 PbH1 repeats span residues 158 to 187 (SDNLNITDVTIDNSAGTAEGHNTDAFDIGS), 188 to 209 (STYINIDGATVYNQDDCLAINS), 210 to 230 (GSHITFTNGYCDGGHGLSIGS), 239 to 260 (VEDVTISNSKVVNSQNGVRIKT), 268 to 290 (VSNVKFEDITLSGITKYGLVVEQ), and 302 to 347 (TNGI…SITG). Asparagine 162 is a glycosylation site (N-linked (GlcNAc...) asparagine). The Proton donor role is filled by aspartate 202. Cysteine 204 and cysteine 220 are oxidised to a cystine. Histidine 224 is an active-site residue. 2 disulfides stabilise this stretch: cysteine 330/cysteine 335 and cysteine 354/cysteine 363.

This sequence belongs to the glycosyl hydrolase 28 family.

It localises to the secreted. The catalysed reaction is (1,4-alpha-D-galacturonosyl)n+m + H2O = (1,4-alpha-D-galacturonosyl)n + (1,4-alpha-D-galacturonosyl)m.. In terms of biological role, involved in maceration and soft-rotting of plant tissue. Hydrolyzes the 1,4-alpha glycosidic bonds of de-esterified pectate in the smooth region of the plant cell wall. This is Probable endopolygalacturonase A (pgaA) from Aspergillus parasiticus.